A 120-amino-acid chain; its full sequence is NAD(P)H-quinone oxidoreductase subunit 3, chloroplastic (120 aa).

The next 3 helical transmembrane spans lie at 7–27, 64–84, and 89–109; these read YQTF…ALLI, SFAL…PWAM, and LGIF…IGLV.

This sequence belongs to the complex I subunit 3 family. As to quaternary structure, NDH is composed of at least 16 different subunits, 5 of which are encoded in the nucleus.

The protein resides in the plastid. It is found in the chloroplast thylakoid membrane. It catalyses the reaction a plastoquinone + NADH + (n+1) H(+)(in) = a plastoquinol + NAD(+) + n H(+)(out). The catalysed reaction is a plastoquinone + NADPH + (n+1) H(+)(in) = a plastoquinol + NADP(+) + n H(+)(out). Functionally, NDH shuttles electrons from NAD(P)H:plastoquinone, via FMN and iron-sulfur (Fe-S) centers, to quinones in the photosynthetic chain and possibly in a chloroplast respiratory chain. The immediate electron acceptor for the enzyme in this species is believed to be plastoquinone. Couples the redox reaction to proton translocation, and thus conserves the redox energy in a proton gradient. In Psilotum nudum (Whisk fern), this protein is NAD(P)H-quinone oxidoreductase subunit 3, chloroplastic.